A 161-amino-acid polypeptide reads, in one-letter code: Fatty acid-binding protein homolog 2 (161 aa).

The N-terminal stretch at Met-1 to Ala-19 is a signal peptide.

This sequence belongs to the calycin superfamily. Fatty-acid binding protein (FABP) family.

The protein resides in the secreted. Its function is as follows. May play a role in sequestering potentially toxic fatty acids and their peroxidation products, or it may be involved in the maintenance of the impermeable lipid layer of the eggshell. The protein is Fatty acid-binding protein homolog 2 (lbp-2) of Caenorhabditis elegans.